Here is a 286-residue protein sequence, read N- to C-terminus: Putative thiosulfate sulfurtransferase (286 aa).

The Rhodanese 1 domain maps to 27–134 (DDPAYRLVEV…WVDNDYPTTD (108 aa)). Residues K162 and K166 each participate in a glycyl lysine isopeptide (Lys-Gly) (interchain with G-Cter in SAMP2) cross-link. The Rhodanese 2 domain occupies 164–283 (VDKGLPLVDV…WGNLVGAPVE (120 aa)). Residue C242 is the Cysteine persulfide intermediate of the active site. R247 is a binding site for substrate.

It carries out the reaction thiosulfate + hydrogen cyanide = thiocyanate + sulfite + 2 H(+). In terms of biological role, may be a sulfotransferase involved in the formation of thiosulfate. This chain is Putative thiosulfate sulfurtransferase (tssA), found in Haloferax volcanii (strain ATCC 29605 / DSM 3757 / JCM 8879 / NBRC 14742 / NCIMB 2012 / VKM B-1768 / DS2) (Halobacterium volcanii).